The sequence spans 345 residues: Phosphoribosylformylglycinamidine cyclo-ligase (345 aa).

This sequence belongs to the AIR synthase family.

It is found in the cytoplasm. It carries out the reaction 2-formamido-N(1)-(5-O-phospho-beta-D-ribosyl)acetamidine + ATP = 5-amino-1-(5-phospho-beta-D-ribosyl)imidazole + ADP + phosphate + H(+). It functions in the pathway purine metabolism; IMP biosynthesis via de novo pathway; 5-amino-1-(5-phospho-D-ribosyl)imidazole from N(2)-formyl-N(1)-(5-phospho-D-ribosyl)glycinamide: step 2/2. The protein is Phosphoribosylformylglycinamidine cyclo-ligase of Prochlorococcus marinus (strain MIT 9313).